Consider the following 644-residue polypeptide: Replication protein E1 (644 aa).

Positions 86 to 88 (KRK) match the Nuclear localization signal motif. 2 positions are modified to phosphoserine; by host: Ser-92 and Ser-96. Residues 180–346 (VPTSPTNQLL…LTIIQHGVDD (167 aa)) are DNA-binding region. The 151-residue stretch at 445–595 (VEFITFLCAL…LPFDKNRNPV (151 aa)) folds into the SF3 helicase domain. Residue 471 to 478 (GPANTGKS) participates in ATP binding. Lys-552 is covalently cross-linked (Glycyl lysine isopeptide (Lys-Gly) (interchain with G-Cter in SUMO)).

Belongs to the papillomaviridae E1 protein family. In terms of assembly, can form hexamers. Interacts with E2 protein; this interaction increases E1 DNA binding specificity. Interacts with host DNA polymerase subunit POLA2. Interacts with host single stranded DNA-binding protein RPA1. Interacts with host TOP1; this interaction stimulates the enzymatic activity of TOP1. In terms of processing, phosphorylated. Post-translationally, sumoylated.

The protein localises to the host nucleus. It catalyses the reaction Couples ATP hydrolysis with the unwinding of duplex DNA by translocating in the 3'-5' direction.. The catalysed reaction is ATP + H2O = ADP + phosphate + H(+). Its function is as follows. ATP-dependent DNA 3'-5' helicase required for initiation of viral DNA replication. It forms a complex with the viral E2 protein. The E1-E2 complex binds to the replication origin which contains binding sites for both proteins. During the initial step, a dimer of E1 interacts with a dimer of protein E2 leading to a complex that binds the viral origin of replication with high specificity. Then, a second dimer of E1 displaces the E2 dimer in an ATP-dependent manner to form the E1 tetramer. Following this, two E1 monomers are added to each half of the site, which results in the formation of two E1 trimers on the viral ori. Subsequently, two hexamers will be created. The double hexamer acts as a bi-directional helicase machinery and unwinds the viral DNA and then recruits the host DNA polymerase to start replication. The sequence is that of Replication protein E1 from Human papillomavirus 59.